The chain runs to 304 residues: Urease accessory protein UreD (304 aa).

Belongs to the UreD family. In terms of assembly, ureD, UreF and UreG form a complex that acts as a GTP-hydrolysis-dependent molecular chaperone, activating the urease apoprotein by helping to assemble the nickel containing metallocenter of UreC. The UreE protein probably delivers the nickel.

The protein localises to the cytoplasm. Its function is as follows. Required for maturation of urease via the functional incorporation of the urease nickel metallocenter. This Haloquadratum walsbyi (strain DSM 16790 / HBSQ001) protein is Urease accessory protein UreD.